The primary structure comprises 500 residues: Putative glucokinase-2 (500 aa).

Residue serine 2 is modified to N-acetylserine. Serine 2 bears the Phosphoserine mark. In terms of domain architecture, Hexokinase spans glutamate 12–leucine 498. Positions asparagine 74 to threonine 217 are hexokinase small subdomain. Lysine 110 serves as a coordination point for ATP. The segment at lysine 159 to phenylalanine 185 is glucose-binding. A hexokinase large subdomain region spans residues asparagine 218 to aspartate 487. Phosphoserine is present on serine 470. Aspartate 487–glycine 492 contributes to the ATP binding site.

It belongs to the hexokinase family.

It is found in the cytoplasm. It catalyses the reaction D-glucose + ATP = D-glucose 6-phosphate + ADP + H(+). The protein operates within carbohydrate degradation; glycolysis; D-glyceraldehyde 3-phosphate and glycerone phosphate from D-glucose: step 1/4. Putative glucokinase involved in phosphorylation of aldohexoses and glucose uptake. Involved in sporulation. Required for the full activation of the early meiotic inducer IME1. The sequence is that of Putative glucokinase-2 (EMI2) from Saccharomyces cerevisiae (strain ATCC 204508 / S288c) (Baker's yeast).